A 122-amino-acid chain; its full sequence is Acidic phospholipase A2 1 (122 aa).

Intrachain disulfides connect Cys-26/Cys-115, Cys-28/Cys-44, Cys-43/Cys-94, Cys-49/Cys-122, Cys-50/Cys-87, Cys-57/Cys-81, and Cys-75/Cys-85. Ca(2+) is bound by residues Tyr-27, Gly-29, and Gly-31. His-47 is an active-site residue. Position 48 (Asp-48) interacts with Ca(2+). Asp-88 is an active-site residue.

It belongs to the phospholipase A2 family. Group II subfamily. D49 sub-subfamily. As to quaternary structure, homodimer. It depends on Ca(2+) as a cofactor. Expressed by the venom gland.

The protein localises to the secreted. It catalyses the reaction a 1,2-diacyl-sn-glycero-3-phosphocholine + H2O = a 1-acyl-sn-glycero-3-phosphocholine + a fatty acid + H(+). Its function is as follows. PLA2 catalyzes the calcium-dependent hydrolysis of the 2-acyl groups in 3-sn-phosphoglycerides. This chain is Acidic phospholipase A2 1, found in Protobothrops mucrosquamatus (Taiwan habu).